Here is a 538-residue protein sequence, read N- to C-terminus: Phosphatidylethanolamine transferase Mcr-2 (538 aa).

A run of 5 helical transmembrane segments spans residues 14–34, 47–67, 72–92, 121–141, and 161–181; these read PFVLMGLVALFLAATANLTFF, LGFIISMAVAVMGAMLLIVVL, YVLKPVLILLLIMGAVTSYFT, LAFFVRIIGLGVLPSVLVAVA, and VSLVLLLVPIGLFSSQYASFF. Glu244 and Thr283 together coordinate Zn(2+). Disulfide bonds link Cys279–Cys289, Cys354–Cys362, and Cys412–Cys420. A Phosphothreonine modification is found at Thr283. Asp463 and His464 together coordinate Zn(2+).

It belongs to the phosphoethanolamine transferase family. Monomer. In terms of processing, phosphorylated at Thr-283; may represent an intermediate in the catalytic mechanism.

Its subcellular location is the cell inner membrane. The catalysed reaction is lipid A (E. coli) + a 1,2-diacyl-sn-glycero-3-phosphoethanolamine + H(+) = lipid A 4'-(2-aminoethyl diphosphate) (E. coli) + a 1,2-diacyl-sn-glycerol. Probably catalyzes the addition of a phosphoethanolamine moiety to lipid A. Phosphoethanolamine modification of lipid A confers polymyxin resistance. Confers resistance to polymyxin-type antibiotics such as colistin. The protein is Phosphatidylethanolamine transferase Mcr-2 of Escherichia coli.